Here is a 254-residue protein sequence, read N- to C-terminus: 5'-nucleotidase SurE (254 aa).

A divalent metal cation is bound by residues aspartate 8, aspartate 9, serine 40, and asparagine 93.

It belongs to the SurE nucleotidase family. A divalent metal cation serves as cofactor.

Its subcellular location is the cytoplasm. It carries out the reaction a ribonucleoside 5'-phosphate + H2O = a ribonucleoside + phosphate. Functionally, nucleotidase that shows phosphatase activity on nucleoside 5'-monophosphates. This is 5'-nucleotidase SurE from Rhizorhabdus wittichii (strain DSM 6014 / CCUG 31198 / JCM 15750 / NBRC 105917 / EY 4224 / RW1) (Sphingomonas wittichii).